The primary structure comprises 199 residues: Glycerol-3-phosphate acyltransferase (199 aa).

5 helical membrane passes run 4-24 (FALF…AILI), 56-76 (LAVL…GYYL), 80-100 (QFEL…PIFF), 115-135 (IAPI…FVFL), and 154-176 (YVWW…LIYR).

This sequence belongs to the PlsY family. As to quaternary structure, probably interacts with PlsX.

It localises to the cell inner membrane. It carries out the reaction an acyl phosphate + sn-glycerol 3-phosphate = a 1-acyl-sn-glycero-3-phosphate + phosphate. It functions in the pathway lipid metabolism; phospholipid metabolism. In terms of biological role, catalyzes the transfer of an acyl group from acyl-phosphate (acyl-PO(4)) to glycerol-3-phosphate (G3P) to form lysophosphatidic acid (LPA). This enzyme utilizes acyl-phosphate as fatty acyl donor, but not acyl-CoA or acyl-ACP. The sequence is that of Glycerol-3-phosphate acyltransferase from Haemophilus influenzae (strain PittGG).